The chain runs to 381 residues: Queuine tRNA-ribosyltransferase (381 aa).

The Proton acceptor role is filled by aspartate 92. Substrate contacts are provided by residues 92-96 (DSGGF), aspartate 146, glutamine 190, and glycine 217. The tract at residues 248-254 (GVGRPED) is RNA binding. The active-site Nucleophile is the aspartate 267. The RNA binding; important for wobble base 34 recognition stretch occupies residues 272-276 (TRNAR). Zn(2+) is bound by residues cysteine 305, cysteine 307, cysteine 310, and histidine 337.

This sequence belongs to the queuine tRNA-ribosyltransferase family. Homodimer. Within each dimer, one monomer is responsible for RNA recognition and catalysis, while the other monomer binds to the replacement base PreQ1. Zn(2+) is required as a cofactor.

The catalysed reaction is 7-aminomethyl-7-carbaguanine + guanosine(34) in tRNA = 7-aminomethyl-7-carbaguanosine(34) in tRNA + guanine. It participates in tRNA modification; tRNA-queuosine biosynthesis. Functionally, catalyzes the base-exchange of a guanine (G) residue with the queuine precursor 7-aminomethyl-7-deazaguanine (PreQ1) at position 34 (anticodon wobble position) in tRNAs with GU(N) anticodons (tRNA-Asp, -Asn, -His and -Tyr). Catalysis occurs through a double-displacement mechanism. The nucleophile active site attacks the C1' of nucleotide 34 to detach the guanine base from the RNA, forming a covalent enzyme-RNA intermediate. The proton acceptor active site deprotonates the incoming PreQ1, allowing a nucleophilic attack on the C1' of the ribose to form the product. After dissociation, two additional enzymatic reactions on the tRNA convert PreQ1 to queuine (Q), resulting in the hypermodified nucleoside queuosine (7-(((4,5-cis-dihydroxy-2-cyclopenten-1-yl)amino)methyl)-7-deazaguanosine). The polypeptide is Queuine tRNA-ribosyltransferase (Xanthomonas axonopodis pv. citri (strain 306)).